The following is a 494-amino-acid chain: NAD(P)H-quinone oxidoreductase subunit 2 B, chloroplastic (494 aa).

A run of 14 helical transmembrane segments spans residues 13-33 (SILP…IDLI), 39-59 (TPWL…ILLF), 81-101 (IFRL…IDYI), 107-127 (ALTE…FLCC), 131-151 (LVTI…LSGY), 166-186 (LLMG…LYGL), 211-231 (MFIS…LVPF), 243-263 (PTPV…ALAT), 277-297 (WHLL…FIAV), 305-325 (MLAY…IAAE), 336-356 (YMLI…LFGL), 378-398 (LSLV…GFFG), 411-433 (LYFL…LKII), and 468-488 (MIIC…IIAI).

It belongs to the complex I subunit 2 family. In terms of assembly, NDH is composed of at least 16 different subunits, 5 of which are encoded in the nucleus.

Its subcellular location is the plastid. It is found in the chloroplast thylakoid membrane. It carries out the reaction a plastoquinone + NADH + (n+1) H(+)(in) = a plastoquinol + NAD(+) + n H(+)(out). It catalyses the reaction a plastoquinone + NADPH + (n+1) H(+)(in) = a plastoquinol + NADP(+) + n H(+)(out). Its function is as follows. NDH shuttles electrons from NAD(P)H:plastoquinone, via FMN and iron-sulfur (Fe-S) centers, to quinones in the photosynthetic chain and possibly in a chloroplast respiratory chain. The immediate electron acceptor for the enzyme in this species is believed to be plastoquinone. Couples the redox reaction to proton translocation, and thus conserves the redox energy in a proton gradient. This Angiopteris evecta (Mule's foot fern) protein is NAD(P)H-quinone oxidoreductase subunit 2 B, chloroplastic.